An 823-amino-acid polypeptide reads, in one-letter code: Dimethyl sulfoxide/trimethylamine N-oxide reductase (823 aa).

The segment at residues 1 to 42 (MTKFSGNELRAELYRRAFLSYSVAPGALGMFGRSLLAKGARA) is a signal peptide (tat-type signal). Mo-bis(molybdopterin guanine dinucleotide) is bound by residues 156–160 (YGWKS), tryptophan 158, serine 189, 232–233 (KT), 262–263 (ID), 283–285 (QTD), 364–365 (WS), arginine 368, asparagine 476, histidine 480, 500–501 (HD), arginine 523, aspartate 553, 685–686 (HP), 691–693 (HSQ), asparagine 779, and 796–797 (GQ).

As to quaternary structure, homodimer. Mo-bis(molybdopterin guanine dinucleotide) is required as a cofactor. Post-translationally, predicted to be exported by the Tat system. The position of the signal peptide cleavage has been experimentally proven.

It localises to the periplasm. It carries out the reaction dimethyl sulfide + a menaquinone + H2O = dimethyl sulfoxide + a menaquinol. The enzyme catalyses trimethylamine + 2 Fe(III)-[cytochrome c] + H2O = trimethylamine N-oxide + 2 Fe(II)-[cytochrome c] + 3 H(+). Catalyzes the reduction of dimethyl sulfoxide (DMSO) and trimethylamine N-oxide (TMAO) to dimethyl sulfide (DMS) and trimethylamine, respectively. The terminal DMSO reductase can also use various sulfoxides and N-oxide compounds as terminal electron acceptor in addition to DMSO and TMAO. The sequence is that of Dimethyl sulfoxide/trimethylamine N-oxide reductase (dorA) from Rhodobacter capsulatus (Rhodopseudomonas capsulata).